A 318-amino-acid polypeptide reads, in one-letter code: Methionyl-tRNA formyltransferase (318 aa).

112 to 115 provides a ligand contact to (6S)-5,6,7,8-tetrahydrofolate; the sequence is SILP.

Belongs to the Fmt family.

The catalysed reaction is L-methionyl-tRNA(fMet) + (6R)-10-formyltetrahydrofolate = N-formyl-L-methionyl-tRNA(fMet) + (6S)-5,6,7,8-tetrahydrofolate + H(+). Its function is as follows. Attaches a formyl group to the free amino group of methionyl-tRNA(fMet). The formyl group appears to play a dual role in the initiator identity of N-formylmethionyl-tRNA by promoting its recognition by IF2 and preventing the misappropriation of this tRNA by the elongation apparatus. The chain is Methionyl-tRNA formyltransferase from Shewanella sp. (strain W3-18-1).